We begin with the raw amino-acid sequence, 245 residues long: Pyridoxine 5'-phosphate synthase (245 aa).

N7 is a binding site for 3-amino-2-oxopropyl phosphate. 9–10 (DH) is a binding site for 1-deoxy-D-xylulose 5-phosphate. R18 contacts 3-amino-2-oxopropyl phosphate. The Proton acceptor role is filled by H43. The 1-deoxy-D-xylulose 5-phosphate site is built by R45 and H50. E70 functions as the Proton acceptor in the catalytic mechanism. Residue T100 coordinates 1-deoxy-D-xylulose 5-phosphate. H190 acts as the Proton donor in catalysis. 3-amino-2-oxopropyl phosphate is bound by residues G191 and 212 to 213 (GH).

The protein belongs to the PNP synthase family. Homooctamer; tetramer of dimers.

It is found in the cytoplasm. The catalysed reaction is 3-amino-2-oxopropyl phosphate + 1-deoxy-D-xylulose 5-phosphate = pyridoxine 5'-phosphate + phosphate + 2 H2O + H(+). It functions in the pathway cofactor biosynthesis; pyridoxine 5'-phosphate biosynthesis; pyridoxine 5'-phosphate from D-erythrose 4-phosphate: step 5/5. Its function is as follows. Catalyzes the complicated ring closure reaction between the two acyclic compounds 1-deoxy-D-xylulose-5-phosphate (DXP) and 3-amino-2-oxopropyl phosphate (1-amino-acetone-3-phosphate or AAP) to form pyridoxine 5'-phosphate (PNP) and inorganic phosphate. The protein is Pyridoxine 5'-phosphate synthase of Prochlorococcus marinus (strain MIT 9303).